Reading from the N-terminus, the 301-residue chain is Phosphatidylcholine:diacylglycerol cholinephosphotransferase 1 (301 aa).

The tract at residues 1-39 is disordered; the sequence is MSAAAAETDVSLRRRSNSLNGNHTNGVAIDGTLDNNNRR. Transmembrane regions (helical) follow at residues 88-108, 141-161, 171-191, 202-222, and 255-275; these read HWIPCMFAAGLLFFMGVEYTL, VLAALNTVFVGMQTTYIVWTW, IAALFMFTCRGILGYSTQLPL, FPVGNVSFFLFFSGHVAGSMI, and GHYTIDLAVGVGAGILFDSLA. Residues histidine 216, histidine 256, and aspartate 260 contribute to the active site.

It belongs to the phosphatidylcholine:diacylglycerol cholinephosphotransferase family.

Its subcellular location is the membrane. The enzyme catalyses 1,2-ditetradecanoyl-sn-glycero-3-phosphocholine + 1,2-di-(9Z-octadecenoyl)-sn-glycerol = 1,2-ditetradecanoyl-sn-glycerol + 1,2-di-(9Z-octadecenoyl)-sn-glycero-3-phosphocholine. Functions as a phosphatidylcholine:diacylglycerol cholinephosphotransferase that catalyzes the transfer of the phosphocholine headgroup from phosphatidylcholine (PC) to diacylglycerol, a major reaction for the transfer of 18:1 into phosphatidylcholine for desaturation and also for the reverse transfer of 18:2 and 18:3 into the triacylglycerols synthesis pathway. The protein is Phosphatidylcholine:diacylglycerol cholinephosphotransferase 1 of Arabidopsis thaliana (Mouse-ear cress).